A 580-amino-acid polypeptide reads, in one-letter code: Protein O-linked-mannose beta-1,4-N-acetylglucosaminyltransferase 2 (580 aa).

At 1 to 4 the chain is on the cytoplasmic side; that stretch reads MHLS. A helical; Signal-anchor for type II membrane protein membrane pass occupies residues 5–25; that stretch reads AVLNALLVSVLAAVLWKHVRL. The Lumenal segment spans residues 26 to 580; it reads REHAAALEEE…PFADVLVCNT (555 aa). N-linked (GlcNAc...) asparagine glycans are attached at residues N99 and N276. Residues 488-580 form the Fibronectin type-III domain; sequence ARCQASVQGA…PFADVLVCNT (93 aa).

The protein belongs to the glycosyltransferase 61 family.

The protein localises to the endoplasmic reticulum membrane. The catalysed reaction is 3-O-(alpha-D-mannosyl)-L-threonyl-[protein] + UDP-N-acetyl-alpha-D-glucosamine = 3-O-(N-acetyl-beta-D-glucosaminyl-(1-&gt;4)-alpha-D-mannosyl)-L-threonyl-[protein] + UDP + H(+). Its pathway is protein modification; protein glycosylation. Its function is as follows. O-linked mannose beta-1,4-N-acetylglucosaminyltransferase that transfers UDP-N-acetyl-D-glucosamine to the 4-position of the mannose to generate N-acetyl-D-glucosamine-beta-1,4-O-D-mannosylprotein. Involved in the biosynthesis of the phosphorylated O-mannosyl trisaccharide (N-acetylgalactosamine-beta-3-N-acetylglucosamine-beta-4-(phosphate-6-)mannose), a carbohydrate structure present in alpha-dystroglycan (DAG1), which is required for binding laminin G-like domain-containing extracellular proteins with high affinity. This is Protein O-linked-mannose beta-1,4-N-acetylglucosaminyltransferase 2 (POMGNT2) from Canis lupus familiaris (Dog).